Reading from the N-terminus, the 128-residue chain is Holin-like protein CidA (128 aa).

3 consecutive transmembrane segments (helical) span residues 23–43 (LIVE…IVIF), 58–78 (IGAL…AVGI), and 84–104 (ILAE…FVVM).

The protein belongs to the CidA/LrgA family. CidA subfamily.

The protein localises to the cell membrane. Functionally, increases the activity of extracellular murein hydrolases possibly by mediating their export via hole formation. Inhibited by the antiholin-like proteins LrgAB. In an unstressed cell, the LrgAB products probably inhibit the function of the CidA protein. When a cell is stressed by the addition of antibiotics or by other factors in the environment, CidA possibly oligomerizes within the bacterial cell membrane, creating lesions that disrupt the proton motive force, which in turn results in loss of cell viability. These lesions are also hypothesized to regulate the subsequent cell lysis by either allowing the murein hydrolases access to the cell wall substrate and/or regulating their activity by a possible change in the cell wall pH that results from loss of membrane potential. This is Holin-like protein CidA from Bacillus licheniformis (strain ATCC 14580 / DSM 13 / JCM 2505 / CCUG 7422 / NBRC 12200 / NCIMB 9375 / NCTC 10341 / NRRL NRS-1264 / Gibson 46).